The sequence spans 76 residues: Protein CsbA (76 aa).

Residues Met1–Ala5 lie on the Extracellular side of the membrane. A helical transmembrane segment spans residues Val6–Val22. Residues Thr23–Tyr27 lie on the Cytoplasmic side of the membrane. The chain crosses the membrane as a helical span at residues Val28–Gly44. Topologically, residues Tyr45–Tyr49 are extracellular. Residues Phe50–Met66 traverse the membrane as a helical segment. The Cytoplasmic portion of the chain corresponds to Ala67–Glu76.

It localises to the cell membrane. In Bacillus subtilis (strain 168), this protein is Protein CsbA (csbA).